Consider the following 113-residue polypeptide: Nucleoid-associated protein Csac_1593 (113 aa).

The protein belongs to the YbaB/EbfC family. Homodimer.

The protein resides in the cytoplasm. The protein localises to the nucleoid. Binds to DNA and alters its conformation. May be involved in regulation of gene expression, nucleoid organization and DNA protection. The sequence is that of Nucleoid-associated protein Csac_1593 from Caldicellulosiruptor saccharolyticus (strain ATCC 43494 / DSM 8903 / Tp8T 6331).